The primary structure comprises 161 residues: SsrA-binding protein (161 aa).

Positions 139-153 are enriched in basic and acidic residues; the sequence is RESIKRKEENRELDR. Residues 139–161 form a disordered region; it reads RESIKRKEENRELDRLRKRRRQE.

It belongs to the SmpB family.

The protein localises to the cytoplasm. Functionally, required for rescue of stalled ribosomes mediated by trans-translation. Binds to transfer-messenger RNA (tmRNA), required for stable association of tmRNA with ribosomes. tmRNA and SmpB together mimic tRNA shape, replacing the anticodon stem-loop with SmpB. tmRNA is encoded by the ssrA gene; the 2 termini fold to resemble tRNA(Ala) and it encodes a 'tag peptide', a short internal open reading frame. During trans-translation Ala-aminoacylated tmRNA acts like a tRNA, entering the A-site of stalled ribosomes, displacing the stalled mRNA. The ribosome then switches to translate the ORF on the tmRNA; the nascent peptide is terminated with the 'tag peptide' encoded by the tmRNA and targeted for degradation. The ribosome is freed to recommence translation, which seems to be the essential function of trans-translation. This is SsrA-binding protein from Syntrophobacter fumaroxidans (strain DSM 10017 / MPOB).